A 388-amino-acid chain; its full sequence is uncharacterized protein (388 aa).

It is found in the mitochondrion. This is an uncharacterized protein from Dictyostelium citrinum (Slime mold).